A 462-amino-acid polypeptide reads, in one-letter code: MATETLELKTPQLADTVAVTEKDTETKKKDEVEKDEAMEEKGEEIDGEKVKSPVTPVSERPIRERKRTGRYVIDTPPRSSGNKPLSITQGRGTRLKEIPNVAYKLSKRKPDDNLFLLHTILYGKKAKAQMLKKNIGQFSGFVWSEQEEEKQRAKAKEKLDKCIKEKLIDFCDVLDIPVNKSTVKKEELAVRVLEFLVCPKATRDILLADSEKETKKRKKSTSKNVTSGESSHVPAKRRRQAKKQEQPTETEGNGESDVGSEGTNDSNGEDDVAPEEENNKSEDTETEDEKDKAKEKTKSTDKKRLSKRTKKEKPAAEEEKSIKGSAKSSRKSFRQVDKSTTSSSKKQKVDKDDSSKEKGKTQTSKPQAKGSKDQGQSRKKGKKEPTRKELHVVVTKILKEVDFNTATLSDILRKLGSHFGIDLMHRKAEVKDIITDAINEMSDDDDEKEEDTEDEGEKEGKD.

Disordered stretches follow at residues 18-91 (AVTE…TQGR) and 212-390 (KETK…RKEL). The span at 20 to 32 (TEKDTETKKKDEV) shows a compositional bias: basic and acidic residues. Positions 33–46 (EKDEAMEEKGEEID) are enriched in acidic residues. The span at 77–91 (PRSSGNKPLSITQGR) shows a compositional bias: polar residues. Positions 267–276 (NGEDDVAPEE) are enriched in acidic residues. Basic and acidic residues-rich tracts occupy residues 277-303 (ENNKSEDTETEDEKDKAKEKTKSTDKK), 312-322 (EKPAAEEEKSI), and 347-360 (QKVDKDDSSKEKGK). The Nuclear localization signal motif lies at 344 to 351 (SKKQKVDK). The region spanning 384–439 (EPTRKELHVVVTKILKEVDFNTATLSDILRKLGSHFGIDLMHRKAEVKDIITDAIN) is the DEK-C domain. DNA-binding regions lie at residues 402 to 416 (DFNTATLSDILRKLG) and 431 to 435 (KDIIT). The disordered stretch occupies residues 438–462 (INEMSDDDDEKEEDTEDEGEKEGKD). Residues 441-462 (MSDDDDEKEEDTEDEGEKEGKD) show a composition bias toward acidic residues.

Found in a mRNA splicing-dependent exon junction complex (EJC). Binds specifically histones H3 and H4.

It localises to the nucleus. It is found in the nucleolus. Chromatin-associated protein which contributes to the modulation of chromatin structure (such as super-helical structure of DNA) and function. Binds to chromatin of protein-coding genes throughout the genome to regulate nucleosome occupancy and chromatin accessibility, and to modulate the expression of target genes. The sequence is that of DEK domain-containing chromatin-associated protein 1 from Arabidopsis thaliana (Mouse-ear cress).